The following is a 284-amino-acid chain: uncharacterized protein (284 aa).

One can recognise an AB hydrolase-1 domain in the interval 25–123; the sequence is PILVMHGGHS…NTLTLQSAVT (99 aa). Residue Ser-96 is part of the active site.

Belongs to the AB hydrolase superfamily.

This is an uncharacterized protein from Bacillus subtilis (strain 168).